The sequence spans 936 residues: Isoleucine--tRNA ligase (936 aa).

The 'HIGH' region motif lies at 58-68; it reads PYANGRAHLGT. Glu-561 is an L-isoleucyl-5'-AMP binding site. Residues 602 to 606 carry the 'KMSKS' region motif; sequence KMSKS. Lys-605 is a binding site for ATP. The Zn(2+) site is built by Cys-899, Cys-902, Cys-919, and Cys-922.

It belongs to the class-I aminoacyl-tRNA synthetase family. IleS type 1 subfamily. Monomer. It depends on Zn(2+) as a cofactor.

It localises to the cytoplasm. It carries out the reaction tRNA(Ile) + L-isoleucine + ATP = L-isoleucyl-tRNA(Ile) + AMP + diphosphate. Catalyzes the attachment of isoleucine to tRNA(Ile). As IleRS can inadvertently accommodate and process structurally similar amino acids such as valine, to avoid such errors it has two additional distinct tRNA(Ile)-dependent editing activities. One activity is designated as 'pretransfer' editing and involves the hydrolysis of activated Val-AMP. The other activity is designated 'posttransfer' editing and involves deacylation of mischarged Val-tRNA(Ile). The protein is Isoleucine--tRNA ligase of Coxiella burnetii (strain CbuK_Q154) (Coxiella burnetii (strain Q154)).